Reading from the N-terminus, the 191-residue chain is AFPAMPLSSLFANAVLRAQHLHLLAADTYKEFERTYIPEEQRHSNKISQSASCYSETIPAPTGKDDAEQKSDMELLRFSLILIQSWLNPVQFLSRVFTNSLVFGTSDRVYEKLRDLEEGIQALMRELEDGSLRGFQVLRPTYDKFDINLRNEDALLKNYGLLSCFKKDLHKVETYLKLMKCRRFGESNCTI.

Zn(2+) is bound at residue H20. A disulfide bridge connects residues C53 and C164. E173 is a Zn(2+) binding site. C181 and C189 are oxidised to a cystine.

This sequence belongs to the somatotropin/prolactin family.

Its subcellular location is the secreted. Functionally, growth hormone plays an important role in growth control and is involved in the regulation of several anabolic processes. Implicated as an osmoregulatory substance important for seawater adaptation. This is Somatotropin (GH) from Chelonia mydas (Green sea-turtle).